Here is a 468-residue protein sequence, read N- to C-terminus: UDP-N-acetylmuramoyl-L-alanine--L-glutamate ligase (468 aa).

122–128 (GTKGKST) contributes to the ATP binding site.

The protein belongs to the MurCDEF family. MurD2 subfamily.

It localises to the cytoplasm. The enzyme catalyses UDP-N-acetyl-alpha-D-muramoyl-L-alanine + L-glutamate + ATP = UDP-N-acetyl-alpha-D-muramoyl-L-alanyl-L-glutamate + ADP + phosphate + H(+). It participates in cell wall biogenesis; peptidoglycan biosynthesis. Functionally, cell wall formation. Catalyzes the addition of L-glutamate to the nucleotide precursor UDP-N-acetylmuramoyl-L-alanine. The protein is UDP-N-acetylmuramoyl-L-alanine--L-glutamate ligase of Xanthomonas euvesicatoria pv. vesicatoria (strain 85-10) (Xanthomonas campestris pv. vesicatoria).